A 354-amino-acid chain; its full sequence is V-type proton ATPase subunit C (354 aa).

This sequence belongs to the V-ATPase C subunit family. V-ATPase is a heteromultimeric enzyme composed of a peripheral catalytic V1 complex (components A to H) attached to an integral membrane V0 proton pore complex (components: a, c, c', c'' and d).

Its subcellular location is the vacuole membrane. In terms of biological role, subunit of the peripheral V1 complex of vacuolar ATPase. Subunit C is necessary for the assembly of the catalytic sector of the enzyme and is likely to have a specific function in its catalytic activity. V-ATPase is responsible for acidifying a variety of intracellular compartments in eukaryotic cells. This is V-type proton ATPase subunit C (VATC) from Hordeum vulgare (Barley).